The chain runs to 89 residues: DNA-binding protein HU (89 aa).

This sequence belongs to the bacterial histone-like protein family. As to quaternary structure, homodimer. The dimer interacts with the DNA mimic protein DMP12. It also interacts with the monomeric form of the DNA mimic protein DMP19 with 1:1 stoichiometry.

With respect to regulation, activity is regulated by the DNA mimic protein DMP12. Activity is inhibited in the presence of the DNA mimic protein DMP19, which interacts with HU and prevents the binding of HU to DNA. Its function is as follows. Histone-like DNA-binding protein which is capable of wrapping DNA to stabilize it, and thus to prevent its denaturation under extreme environmental conditions. The chain is DNA-binding protein HU from Neisseria meningitidis serogroup B (strain ATCC BAA-335 / MC58).